The primary structure comprises 631 residues: 1-deoxy-D-xylulose-5-phosphate synthase (631 aa).

Thiamine diphosphate is bound by residues His78 and 119-121 (AHS). Residue Asp150 participates in Mg(2+) binding. Thiamine diphosphate is bound by residues 151–152 (GA), Asn179, Tyr286, and Glu368. Mg(2+) is bound at residue Asn179.

The protein belongs to the transketolase family. DXPS subfamily. As to quaternary structure, homodimer. The cofactor is Mg(2+). Requires thiamine diphosphate as cofactor.

The enzyme catalyses D-glyceraldehyde 3-phosphate + pyruvate + H(+) = 1-deoxy-D-xylulose 5-phosphate + CO2. It functions in the pathway metabolic intermediate biosynthesis; 1-deoxy-D-xylulose 5-phosphate biosynthesis; 1-deoxy-D-xylulose 5-phosphate from D-glyceraldehyde 3-phosphate and pyruvate: step 1/1. Its function is as follows. Catalyzes the acyloin condensation reaction between C atoms 2 and 3 of pyruvate and glyceraldehyde 3-phosphate to yield 1-deoxy-D-xylulose-5-phosphate (DXP). This chain is 1-deoxy-D-xylulose-5-phosphate synthase, found in Verminephrobacter eiseniae (strain EF01-2).